Consider the following 467-residue polypeptide: Tubulointerstitial nephritis antigen-like (467 aa).

Residues 1-21 form the signal peptide; it reads MWRCPLGLLLLLPLAGHLALG. The SMB domain maps to 50–98; the sequence is EQDLCCRGRADDCALPYLGAICYCDLFCNRTVSDCCPDFWDFCLGVPPP. Intrachain disulfides connect cysteine 54–cysteine 73, cysteine 71–cysteine 73, cysteine 71–cysteine 85, cysteine 77–cysteine 84, and cysteine 85–cysteine 92. An N-linked (GlcNAc...) asparagine glycan is attached at asparagine 78. Asparagine 161 is a glycosylation site (N-linked (GlcNAc...) asparagine).

This sequence belongs to the peptidase C1 family. In terms of processing, glycosylated. As to expression, highly expressed in aorta, heart, placenta, kidney and a colorectal adenocarcinoma cell line. Moderately expressed in skeletal muscle, pancreas, lung, lymph nodes, adrenal gland, bone marrow and thyroid. Weakly expressed in colon, small intestine, ovary, spleen, testis and prostate. Predominantly found in vascular smooth muscle cells, but also in cardiac and skeletal muscle cells as well as kidney.

The protein localises to the secreted. May be implicated in the adrenocortical zonation and in mechanisms for repressing the CYP11B1 gene expression in adrenocortical cells. This is a non catalytic peptidase C1 family protein. The polypeptide is Tubulointerstitial nephritis antigen-like (TINAGL1) (Homo sapiens (Human)).